We begin with the raw amino-acid sequence, 974 residues long: Pentatricopeptide repeat-containing protein At5g61990, mitochondrial (974 aa).

A mitochondrion-targeting transit peptide spans 1–31; sequence MMGSMLFRKRTLVTRANFLLFRSFSVNVEKL. PPR repeat units follow at residues 96–130, 150–184, 185–219, 220–250, 257–275, 276–310, 311–345, 346–380, 381–415, 416–450, 451–485, 486–520, 521–555, 556–590, 591–625, 626–660, 661–695, 696–730, 731–761, 765–799, 804–838, 839–873, 874–908, and 914–948; these read KLDS…NWPV, DGVL…ELVP, RLSR…NVVF, DVKT…TEKE, NVDG…GLVP, LKYT…GVSL, DNHT…GINI, KPYM…GLIP, QAQA…NIVI, SPYT…GCRP, NVVI…GIAP, DIFC…GLKP, NAFT…GVLP, NKVL…GILG, DAKT…GIAP, DVFS…GLTP, NVII…GLHP, NAVT…GLVP, DSFV…NKKG, STAP…SFDR, NDVT…NLMP, TVIT…GIEP, DHIM…NAVD, and SIST…QYIP.

Belongs to the PPR family. P subfamily.

It is found in the mitochondrion. This Arabidopsis thaliana (Mouse-ear cress) protein is Pentatricopeptide repeat-containing protein At5g61990, mitochondrial.